A 350-amino-acid polypeptide reads, in one-letter code: Probable poly-beta-1,6-N-acetyl-D-glucosamine export protein (350 aa).

The next 10 membrane-spanning stretches (helical) occupy residues 7-29, 44-66, 79-101, 116-138, 145-167, 187-204, 211-233, 243-262, 269-291, and 306-328; these read ELVY…TQIT, FYIR…LLTT, TRVK…SESL, LLGQ…SYII, LFNS…YYFT, IIFG…MGYN, FLER…FIAL, SFSY…ILGI, ILFN…HPII, and TMVF…GMIL.

This sequence belongs to the acyltransferase 3 family.

It is found in the cell membrane. Its function is as follows. Presumably involved in the export of the biofilm adhesin polysaccharide poly-beta-1,6-N-acetyl-D-glucosamine (PNAG, also referred to as PIA) across the cell membrane. This Staphylococcus aureus (strain Mu50 / ATCC 700699) protein is Probable poly-beta-1,6-N-acetyl-D-glucosamine export protein (icaC).